The following is a 141-amino-acid chain: Pancreatic progenitor cell differentiation and proliferation factor-like protein (141 aa).

The disordered stretch occupies residues 72–141; that stretch reads DQSACGGNGP…GAPKDTNSPQ (70 aa). The span at 95–105 shows a compositional bias: low complexity; the sequence is SLLQQEESQLL. Polar residues predominate over residues 112-122; that stretch reads GTVNRFRNSQT.

This sequence belongs to the PPDPF family.

In Bos taurus (Bovine), this protein is Pancreatic progenitor cell differentiation and proliferation factor-like protein.